The sequence spans 704 residues: Elongation factor G 1 (704 aa).

The 283-residue stretch at 8 to 290 (ERYRNIGICA…CVVEYMPAPT (283 aa)) folds into the tr-type G domain. Residues 17–24 (AHVDAGKT), 88–92 (DTPGH), and 142–145 (NKMD) contribute to the GTP site.

It belongs to the TRAFAC class translation factor GTPase superfamily. Classic translation factor GTPase family. EF-G/EF-2 subfamily.

It is found in the cytoplasm. In terms of biological role, catalyzes the GTP-dependent ribosomal translocation step during translation elongation. During this step, the ribosome changes from the pre-translocational (PRE) to the post-translocational (POST) state as the newly formed A-site-bound peptidyl-tRNA and P-site-bound deacylated tRNA move to the P and E sites, respectively. Catalyzes the coordinated movement of the two tRNA molecules, the mRNA and conformational changes in the ribosome. This Pseudoalteromonas translucida (strain TAC 125) protein is Elongation factor G 1.